The sequence spans 107 residues: Putative double-stranded DNA mimic protein NTHI1680 (107 aa).

This sequence belongs to the putative dsDNA mimic protein family.

Its function is as follows. May act as a double-stranded DNA (dsDNA) mimic. Probably regulates the activity of a dsDNA-binding protein. This is Putative double-stranded DNA mimic protein NTHI1680 from Haemophilus influenzae (strain 86-028NP).